A 1171-amino-acid polypeptide reads, in one-letter code: ATP-dependent helicase/deoxyribonuclease subunit B (1171 aa).

Residues 1-343 form the UvrD-like helicase ATP-binding domain; that stretch reads MSLRFVIGRA…LVAEENYRYR (343 aa). 8–15 is an ATP binding site; sequence GRAGSGKS. The 307-residue stretch at 281–587 folds into the UvrD-like helicase C-terminal domain; it reads MEQPRFHSPA…QFANIPPSLD (307 aa). [4Fe-4S] cluster contacts are provided by C805, C1129, C1132, and C1138.

The protein belongs to the helicase family. AddB/RexB type 1 subfamily. As to quaternary structure, heterodimer of AddA and AddB. It depends on Mg(2+) as a cofactor. [4Fe-4S] cluster serves as cofactor.

Functionally, the heterodimer acts as both an ATP-dependent DNA helicase and an ATP-dependent, dual-direction single-stranded exonuclease. Recognizes the chi site generating a DNA molecule suitable for the initiation of homologous recombination. The AddB subunit has 5' -&gt; 3' nuclease activity but not helicase activity. The polypeptide is ATP-dependent helicase/deoxyribonuclease subunit B (Bacillus thuringiensis subsp. konkukian (strain 97-27)).